Consider the following 320-residue polypeptide: MAASSEVSIDPDQWFYIYSLERVAYVCERVGSPVMEEAELRRRRRKRPFLTTTHDELELQMEDLVDELYGVDEQGSSSAAARKRRLTAEQVRALERSFEEEKRKLEPERKSELARRLGIAPRQVAVWFQNRRARWKTKQLELDFDRLRAAHDELLAGRTALAADNESLRSQVILLTEKLQANGKSPSPSPAPAEQTAVPAAPESAKSFQLEEGRRLYDAAGSTTTTNGGGGGVAMPAARVAAARAASNDSPESYFAGARSPPSSSEDDCGGAGSDDDYPSSSVLLPVDATLVGDAFEHAVAATVAADEEAPLNSWEWFWN.

The homeobox DNA-binding region spans 79-139; that stretch reads AAARKRRLTA…NRRARWKTKQ (61 aa). The tract at residues 138–182 is leucine-zipper; sequence KQLELDFDRLRAAHDELLAGRTALAADNESLRSQVILLTEKLQAN. Disordered regions lie at residues 181–209 and 249–282; these read ANGK…KSFQ and DSPE…PSSS. Over residues 265–278 the composition is skewed to acidic residues; sequence SEDDCGGAGSDDDY.

It belongs to the HD-ZIP homeobox family. Class I subfamily. As to expression, expressed in roots, leaf sheaths and blades and panicles.

Its subcellular location is the nucleus. Probable transcription factor. The protein is Homeobox-leucine zipper protein HOX25 (HOX25) of Oryza sativa subsp. japonica (Rice).